We begin with the raw amino-acid sequence, 260 residues long: Putative serine protease 45 (260 aa).

Residues 1-234 (MTRHWPWEVS…YTKWIKKQMS (234 aa)) form the Peptidase S1 domain. Cys-19 and Cys-35 are oxidised to a cystine. Residue His-34 is the Charge relay system of the active site. N-linked (GlcNAc...) asparagine glycosylation is present at Asn-55. Residue Asp-82 is the Charge relay system of the active site. Cystine bridges form between Cys-116–Cys-192, Cys-151–Cys-173, and Cys-182–Cys-210. Ser-186 functions as the Charge relay system in the catalytic mechanism.

The protein belongs to the peptidase S1 family.

In Homo sapiens (Human), this protein is Putative serine protease 45.